The primary structure comprises 165 residues: Putative ankyrin repeat domain-containing protein 20A5 (165 aa).

3 ANK repeats span residues 66 to 95 (QHRT…QIDI), 99 to 128 (ENRT…NPNL), and 132 to 161 (YGNT…NIEA).

The sequence is that of Putative ankyrin repeat domain-containing protein 20A5 (ANKRD20A5P) from Homo sapiens (Human).